The primary structure comprises 113 residues: UPF0342 protein MGAS2096_Spy0691 (113 aa).

It belongs to the UPF0342 family.

The chain is UPF0342 protein MGAS2096_Spy0691 from Streptococcus pyogenes serotype M12 (strain MGAS2096).